A 243-amino-acid chain; its full sequence is UPF0688 protein C1orf174 (243 aa).

Disordered regions lie at residues 78–100 (NDSA…AEGS) and 132–243 (LAKT…DAEM). The span at 145–157 (SAGSGAEESNSSS) shows a compositional bias: low complexity. Phosphoserine is present on residues serine 148 and serine 189. The span at 233-243 (DDDDDDDDAEM) shows a compositional bias: acidic residues.

Belongs to the UPF0688 family.

It localises to the nucleus. The sequence is that of UPF0688 protein C1orf174 (C1orf174) from Homo sapiens (Human).